A 325-amino-acid polypeptide reads, in one-letter code: NADH-quinone oxidoreductase subunit H (325 aa).

9 helical membrane passes run isoleucine 11–phenylalanine 31, asparagine 50–phenylalanine 69, valine 81–valine 101, isoleucine 114–glycine 134, leucine 154–phenylalanine 174, isoleucine 186–valine 206, phenylalanine 237–phenylalanine 257, leucine 265–isoleucine 285, and valine 304–alanine 324.

It belongs to the complex I subunit 1 family. As to quaternary structure, NDH-1 is composed of 13 different subunits. Subunits NuoA, H, J, K, L, M, N constitute the membrane sector of the complex.

The protein resides in the cell inner membrane. The enzyme catalyses a quinone + NADH + 5 H(+)(in) = a quinol + NAD(+) + 4 H(+)(out). In terms of biological role, NDH-1 shuttles electrons from NADH, via FMN and iron-sulfur (Fe-S) centers, to quinones in the respiratory chain. The immediate electron acceptor for the enzyme in this species is believed to be ubiquinone. Couples the redox reaction to proton translocation (for every two electrons transferred, four hydrogen ions are translocated across the cytoplasmic membrane), and thus conserves the redox energy in a proton gradient. This subunit may bind ubiquinone. This chain is NADH-quinone oxidoreductase subunit H, found in Citrobacter koseri (strain ATCC BAA-895 / CDC 4225-83 / SGSC4696).